The primary structure comprises 382 residues: Carbamoyl phosphate synthase small chain (382 aa).

A CPSase region spans residues 1-189 (MIKSALLVLE…GLPEAKKEDE (189 aa)). L-glutamine is bound by residues S47, G241, and G243. The Glutamine amidotransferase type-1 domain maps to 193-380 (HVVAYDFGAK…IALIEQYRKT (188 aa)). The Nucleophile role is filled by C269. 5 residues coordinate L-glutamine: L270, Q273, N311, G313, and F314. Catalysis depends on residues H353 and E355.

It belongs to the CarA family. Composed of two chains; the small (or glutamine) chain promotes the hydrolysis of glutamine to ammonia, which is used by the large (or ammonia) chain to synthesize carbamoyl phosphate. Tetramer of heterodimers (alpha,beta)4.

It carries out the reaction hydrogencarbonate + L-glutamine + 2 ATP + H2O = carbamoyl phosphate + L-glutamate + 2 ADP + phosphate + 2 H(+). It catalyses the reaction L-glutamine + H2O = L-glutamate + NH4(+). It participates in amino-acid biosynthesis; L-arginine biosynthesis; carbamoyl phosphate from bicarbonate: step 1/1. Its pathway is pyrimidine metabolism; UMP biosynthesis via de novo pathway; (S)-dihydroorotate from bicarbonate: step 1/3. Its function is as follows. Small subunit of the glutamine-dependent carbamoyl phosphate synthetase (CPSase). CPSase catalyzes the formation of carbamoyl phosphate from the ammonia moiety of glutamine, carbonate, and phosphate donated by ATP, constituting the first step of 2 biosynthetic pathways, one leading to arginine and/or urea and the other to pyrimidine nucleotides. The small subunit (glutamine amidotransferase) binds and cleaves glutamine to supply the large subunit with the substrate ammonia. This is Carbamoyl phosphate synthase small chain from Escherichia coli O6:H1 (strain CFT073 / ATCC 700928 / UPEC).